The primary structure comprises 638 residues: CTTNBP2 N-terminal-like protein (638 aa).

The stretch at 87 to 284 (MKQCKNMQER…KDLEAAQQHR (198 aa)) forms a coiled coil. Disordered stretches follow at residues 280–303 (AQQH…TATE), 360–430 (RELT…PCSS), 463–490 (RHKF…LSPT), and 514–621 (NQGP…CSPS). The residue at position 285 (Ser-285) is a Phosphoserine. The segment covering 360–371 (RELTSDSSTENQ) has biased composition (polar residues). Low complexity-rich tracts occupy residues 401–430 (TMPS…PCSS) and 467–477 (QSQADQDQQAS). Ser-481, Ser-488, Ser-522, Ser-526, Ser-559, Ser-562, and Ser-567 each carry phosphoserine. Residues 514 to 528 (NQGPIKPVSPNSSPF) show a composition bias toward polar residues. A phosphothreonine mark is found at Thr-569 and Thr-589. The span at 589-620 (TPSQSATTPVTKTHSQASSLAATEDLASSCSP) shows a compositional bias: polar residues. A Phosphoserine modification is found at Ser-591.

In terms of assembly, interacts with CTTN/cortactin; this interaction may redistribute CTTN to stress fibers. May form homomers. Associates with the core of STRIPAK complexes composed of PP2A catalytic and scaffolding subunits, the striatins (PP2A regulatory subunits), the striatin-associated proteins MOB4, STRIP1 and STRIP2, PDCD10 and members of the STE20 kinases, such as STK24 and STK26. In terms of tissue distribution, predominantly expressed in skin, also detectable in spleen and lung (at protein level). Very low levels, if any, in brain (at protein level).

The protein resides in the cell projection. The protein localises to the lamellipodium. Its subcellular location is the cytoplasm. It is found in the cytoskeleton. It localises to the stress fiber. In terms of biological role, regulates lamellipodial actin dynamics in a CTTN-dependent manner. Associates with core striatin-interacting phosphatase and kinase (STRIPAK) complex to form CTTNBP2NL-STRIPAK complexes. STRIPAK complexes have critical roles in protein (de)phosphorylation and are regulators of multiple signaling pathways including Hippo, MAPK, nuclear receptor and cytoskeleton remodeling. Different types of STRIPAK complexes are involved in a variety of biological processes such as cell growth, differentiation, apoptosis, metabolism and immune regulation. This chain is CTTNBP2 N-terminal-like protein (Cttnbp2nl), found in Mus musculus (Mouse).